A 446-amino-acid chain; its full sequence is Glutamine synthetase (446 aa).

Residues 18–103 (ENVRYLRLQF…LICDVYKTDG (86 aa)) enclose the GS beta-grasp domain. The GS catalytic domain maps to 110–446 (PRANLKRVLK…WERDQYMKQY (337 aa)). Residues Glu134 and Glu136 each coordinate Mg(2+). Glu186 provides a ligand contact to ATP. Residues Glu191 and Glu198 each coordinate Mg(2+). L-glutamate contacts are provided by residues 242-243 (NG) and Gly243. Residue His247 coordinates Mg(2+). Ser251 contributes to the ATP binding site. Arg300, Glu306, and Arg318 together coordinate L-glutamate. ATP-binding residues include Arg318 and Arg323. Glu335 contacts Mg(2+). Arg337 lines the L-glutamate pocket.

Belongs to the glutamine synthetase family. As to quaternary structure, oligomer of 12 subunits arranged in the form of two hexagons. In its feedback-inhibited form, interacts with TnrA in order to block its DNA-binding activity. Mg(2+) serves as cofactor.

Its subcellular location is the cytoplasm. It carries out the reaction L-glutamate + NH4(+) + ATP = L-glutamine + ADP + phosphate + H(+). Its activity is regulated as follows. Inhibited by glutamine. Its function is as follows. Glutamine synthetase (GS) is an unusual multitasking protein that functions as an enzyme, a transcription coregulator, and a chaperone in ammonium assimilation and in the regulation of genes involved in nitrogen metabolism. It catalyzes the ATP-dependent biosynthesis of glutamine from glutamate and ammonia. Feedback-inhibited GlnA also interacts with and regulates the activity of the transcriptional regulator TnrA. During nitrogen limitation, TnrA is in its DNA-binding active state and turns on the transcription of genes required for nitrogen assimilation. Under conditions of nitrogen excess, feedback-inhibited GlnA forms a stable complex with TnrA, which inhibits its DNA-binding activity. In contrast, feedback-inhibited GlnA acts as a chaperone to stabilize the DNA-binding activity of GlnR, which represses the transcription of nitrogen assimilation genes. The polypeptide is Glutamine synthetase (Staphylococcus aureus (strain N315)).